We begin with the raw amino-acid sequence, 619 residues long: TBC domain-containing protein C1952.17c (619 aa).

The Rab-GAP TBC domain maps to 34–387 (PDEYSLRAKA…RLWDSIIADQ (354 aa)).

It is found in the cytoplasm. May act as a GTPase-activating protein for Rab family protein(s). In Schizosaccharomyces pombe (strain 972 / ATCC 24843) (Fission yeast), this protein is TBC domain-containing protein C1952.17c.